The following is a 448-amino-acid chain: Argininosuccinate synthase (448 aa).

ATP-binding positions include 17-25 and A43; that span reads AFSGGLDTS. Y99 lines the L-citrulline pocket. G129 and T131 together coordinate ATP. 3 residues coordinate L-aspartate: T131, N135, and D136. N135 lines the L-citrulline pocket. D136 contributes to the ATP binding site. L-citrulline is bound by residues R139 and S192. D194 contacts ATP. Residues T201, E203, and E280 each coordinate L-citrulline.

This sequence belongs to the argininosuccinate synthase family. Type 2 subfamily. As to quaternary structure, homotetramer.

The protein resides in the cytoplasm. The catalysed reaction is L-citrulline + L-aspartate + ATP = 2-(N(omega)-L-arginino)succinate + AMP + diphosphate + H(+). It functions in the pathway amino-acid biosynthesis; L-arginine biosynthesis; L-arginine from L-ornithine and carbamoyl phosphate: step 2/3. The chain is Argininosuccinate synthase from Pectobacterium carotovorum subsp. carotovorum (strain PC1).